We begin with the raw amino-acid sequence, 1598 residues long: Mushroom body large-type Kenyon cell-specific protein 1 (1598 aa).

Disordered regions lie at residues 83–105 (PGNL…SLPA), 140–387 (RHHH…SDGI), 436–462 (PHDD…PMSV), and 495–525 (PLVG…SQDN). A compositionally biased stretch (basic residues) spans 140-151 (RHHHLQNHHHHL). Over residues 164–174 (QQQQQQQQRQQ) the composition is skewed to low complexity. Positions 175-191 (QRQEERRLRPDEIKVEV) are enriched in basic and acidic residues. Over residues 210 to 263 (STDASTPATVTTTGATTTLPAASATGTGPATPSAVVATSNATAAMTTGTTTIPT) the composition is skewed to low complexity. Over residues 275-291 (EGADDRDDDEENEEEED) the composition is skewed to acidic residues. 3 stretches are compositionally biased toward basic and acidic residues: residues 292–305 (GRGQ…LKLD), 315–324 (LRREKDRGSR), and 335–346 (DGTKERTEEVAL). Position 444 is a phosphoserine; by MAPK (serine 444). Low complexity predominate over residues 445–461 (PQSDSSSSSRSAESPMS). An HTH psq-type 1 domain is found at 582 to 634 (VGAGGGRRAYTEEELQAALRDIQSGKLGTRRAAVIYGIPRSTLRNKVYKLAME). A DNA-binding region (H-T-H motif) is located at residues 610–630 (TRRAAVIYGIPRSTLRNKVYK). Disordered stretches follow at residues 636-705 (ERDA…SGAE), 797-877 (RLSK…DSAQ), 962-1045 (GQTV…NYDR), 1082-1145 (ERHL…NGIK), 1248-1283 (ETSA…NGSF), and 1301-1598 (RAMT…SVEQ). Residues 653–687 (APATTITTITTTTTTTTTTTTTTTTPNTTQNASAT) show a composition bias toward low complexity. The span at 694–705 (DEVDDKELSGAE) shows a compositional bias: acidic residues. Residues 820–855 (THPQAQAQAQPQQQQQQQQQQPQQQQQQQQQQQQQQ) are compositionally biased toward low complexity. Over residues 965–975 (VSGGGMGGCQP) the composition is skewed to gly residues. Low complexity predominate over residues 1003–1021 (ANAQQGQAQAQAKPQSQEA). In terms of domain architecture, HTH psq-type 2 spans 1034 to 1086 (RPKRGKYRNYDRDSLVEAVRAVQRGEMSVHRAGSYYGVPHSTLEYKVKERHLM). A DNA-binding region (H-T-H motif) is located at residues 1062 to 1082 (VHRAGSYYGVPHSTLEYKVKE). The segment covering 1093–1102 (QKQSDDKTKE) has biased composition (basic and acidic residues). Low complexity predominate over residues 1103-1120 (TSTVTAAAAATNIRPGTA). A compositionally biased stretch (low complexity) spans 1309 to 1318 (QQQQASSQQQ). 2 stretches are compositionally biased toward basic and acidic residues: residues 1383–1392 (DRGRNDDGSD) and 1407–1442 (GSRD…DRKT). The span at 1447-1466 (PQQPQQQQQQQQQQQQQQQQ) shows a compositional bias: low complexity. Positions 1481–1497 (TDKKSACDSKLIVDHSS) are enriched in basic and acidic residues. Residues 1501–1547 (QQQQPQQQQQQQQQQQPQQQSQQPQQQQPQPQQQQQQQQQQQPQQQQ) show a composition bias toward low complexity. Residues 1562-1577 (RGYNSGNNRSGEQANS) are compositionally biased toward polar residues.

In terms of assembly, homodimer. As to expression, large-type Kenyon cells of mushroom body.

The protein resides in the nucleus. In terms of biological role, transcriptional activator which binds to the consensus sequence 5'-CCCTATCGATCGATCTCTACCT-3'. May play a role in higher-order sensory processing. In Apis mellifera (Honeybee), this protein is Mushroom body large-type Kenyon cell-specific protein 1 (Mblk-1).